A 466-amino-acid chain; its full sequence is ATP synthase subunit beta (466 aa).

155 to 162 (GGAGVGKT) contributes to the ATP binding site.

The protein belongs to the ATPase alpha/beta chains family. F-type ATPases have 2 components, CF(1) - the catalytic core - and CF(0) - the membrane proton channel. CF(1) has five subunits: alpha(3), beta(3), gamma(1), delta(1), epsilon(1). CF(0) has three main subunits: a(1), b(2) and c(9-12). The alpha and beta chains form an alternating ring which encloses part of the gamma chain. CF(1) is attached to CF(0) by a central stalk formed by the gamma and epsilon chains, while a peripheral stalk is formed by the delta and b chains.

The protein localises to the cell inner membrane. It carries out the reaction ATP + H2O + 4 H(+)(in) = ADP + phosphate + 5 H(+)(out). Functionally, produces ATP from ADP in the presence of a proton gradient across the membrane. The catalytic sites are hosted primarily by the beta subunits. In Bordetella avium (strain 197N), this protein is ATP synthase subunit beta.